The chain runs to 122 residues: Large ribosomal subunit protein uL14 (122 aa).

It belongs to the universal ribosomal protein uL14 family. Part of the 50S ribosomal subunit. Forms a cluster with proteins L3 and L19. In the 70S ribosome, L14 and L19 interact and together make contacts with the 16S rRNA in bridges B5 and B8.

Functionally, binds to 23S rRNA. Forms part of two intersubunit bridges in the 70S ribosome. This chain is Large ribosomal subunit protein uL14, found in Jannaschia sp. (strain CCS1).